The chain runs to 312 residues: Nucleosome assembly protein 1-like 4 (312 aa).

Residues 24 to 78 (VETLKNKLQALAEQHVDVLESLAPSVRKRVDVLMEIQSQHDELEVKFFEEKAALE) are a coiled coil. The Nuclear export signal motif lies at 45-60 (LAPSVRKRVDVLMEIQ). A disordered region spans residues 289–312 (DYGASWVDDEEEDDNNDEYSDEEA).

This sequence belongs to the nucleosome assembly protein (NAP) family.

The protein resides in the nucleus. It is found in the cytoplasm. In terms of biological role, may modulate chromatin structure by regulation of nucleosome assembly/disassembly. This Oryza sativa subsp. japonica (Rice) protein is Nucleosome assembly protein 1-like 4.